A 524-amino-acid chain; its full sequence is 2-isopropylmalate synthase (524 aa).

The Pyruvate carboxyltransferase domain maps to 5 to 267 (VIIFDTTLRD…HTNIRHSEIH (263 aa)). Mn(2+)-binding residues include Asp-14, His-202, His-204, and Asn-238. Residues 392–524 (KLEYLGVQSG…KTDKINTESV (133 aa)) are regulatory domain.

Belongs to the alpha-IPM synthase/homocitrate synthase family. LeuA type 1 subfamily. Homodimer. Requires Mn(2+) as cofactor.

Its subcellular location is the cytoplasm. It carries out the reaction 3-methyl-2-oxobutanoate + acetyl-CoA + H2O = (2S)-2-isopropylmalate + CoA + H(+). The protein operates within amino-acid biosynthesis; L-leucine biosynthesis; L-leucine from 3-methyl-2-oxobutanoate: step 1/4. Its function is as follows. Catalyzes the condensation of the acetyl group of acetyl-CoA with 3-methyl-2-oxobutanoate (2-ketoisovalerate) to form 3-carboxy-3-hydroxy-4-methylpentanoate (2-isopropylmalate). This Aeromonas salmonicida (strain A449) protein is 2-isopropylmalate synthase.